A 465-amino-acid chain; its full sequence is Protein maelstrom (465 aa).

The HMG box DNA-binding region spans 2 to 69 (APKKHSGFMM…ADRGKRERLN (68 aa)). Residues 415–440 (MRKSSKHTGPSVSTQRERNAGAWNLP) are disordered.

The protein belongs to the maelstrom family.

The protein resides in the cytoplasm. It localises to the nucleus. Functionally, involved both in the piRNA and miRNA metabolic processes. As a component of the meiotic nuage, plays a central role during oogenesis by repressing transposable elements and preventing their mobilization, which is essential for the germline integrity. Repression of transposable elements is mediated via the piRNA metabolic process, which mediates the repression of transposable elements during meiosis by forming complexes composed of piRNAs and Piwi proteins and governs the repression of transposons. As a nuclear component, it is required for proper differentiation in the germline stem cell (GSC) lineage by repressing microRNA-7 (miR-7), thereby acting as an indirect regulator of bag-of-marbles (Bam). Acts by binding to the promoter of miR-7 gene and repressing its expression; miR-7 repression alleviates the Bam repression by miR-7, thereby allowing differentiation in the germline stem cell (GSC) lineage. The polypeptide is Protein maelstrom (mael) (Drosophila yakuba (Fruit fly)).